Here is a 486-residue protein sequence, read N- to C-terminus: Cobyric acid synthase (486 aa).

One can recognise a GATase cobBQ-type domain in the interval 248–439; the sequence is MLRVVVPVLP…VHGLFDTPAA (192 aa). Cys-329 (nucleophile) is an active-site residue. The active site involves His-431.

The protein belongs to the CobB/CobQ family. CobQ subfamily.

It functions in the pathway cofactor biosynthesis; adenosylcobalamin biosynthesis. Catalyzes amidations at positions B, D, E, and G on adenosylcobyrinic A,C-diamide. NH(2) groups are provided by glutamine, and one molecule of ATP is hydrogenolyzed for each amidation. The polypeptide is Cobyric acid synthase (Paraburkholderia phytofirmans (strain DSM 17436 / LMG 22146 / PsJN) (Burkholderia phytofirmans)).